Reading from the N-terminus, the 271-residue chain is Shikimate dehydrogenase (NADP(+)) (271 aa).

Residues 14–16 (SLS) and T61 each bind shikimate. K65 functions as the Proton acceptor in the catalytic mechanism. 2 residues coordinate shikimate: N86 and D101. Residues 125–129 (GAGGA) and I212 contribute to the NADP(+) site. Residue Y214 coordinates shikimate. G235 serves as a coordination point for NADP(+).

It belongs to the shikimate dehydrogenase family. Homodimer.

It carries out the reaction shikimate + NADP(+) = 3-dehydroshikimate + NADPH + H(+). Its pathway is metabolic intermediate biosynthesis; chorismate biosynthesis; chorismate from D-erythrose 4-phosphate and phosphoenolpyruvate: step 4/7. Functionally, involved in the biosynthesis of the chorismate, which leads to the biosynthesis of aromatic amino acids. Catalyzes the reversible NADPH linked reduction of 3-dehydroshikimate (DHSA) to yield shikimate (SA). This is Shikimate dehydrogenase (NADP(+)) from Clostridium perfringens (strain SM101 / Type A).